A 2183-amino-acid chain; its full sequence is DNA polymerase epsilon catalytic subunit A (2183 aa).

Zn(2+)-binding residues include Cys-2066, Cys-2069, Cys-2090, and Cys-2093. A CysA-type zinc finger spans residues 2066–2093 (CFKCKNPCDLDLCKDSCCTKSGFRCPLC). 4 residues coordinate [4Fe-4S] cluster: Cys-2124, Cys-2127, Cys-2139, and Cys-2141. Positions 2124–2141 (CDKCRRVKEYELTEFCPC) match the CysB motif motif.

Belongs to the DNA polymerase type-B family. Heterotetramer. Consists of 4 subunits: POL2, DPB2, DPB3 and DPB4. [4Fe-4S] cluster serves as cofactor.

Its subcellular location is the nucleus. The catalysed reaction is DNA(n) + a 2'-deoxyribonucleoside 5'-triphosphate = DNA(n+1) + diphosphate. In terms of biological role, DNA polymerase II participates in chromosomal DNA replication. This chain is DNA polymerase epsilon catalytic subunit A (POL2), found in Yarrowia lipolytica (strain CLIB 122 / E 150) (Yeast).